An 87-amino-acid polypeptide reads, in one-letter code: LYR motif-containing protein 2 (87 aa).

The transit peptide at 1–19 directs the protein to the mitochondrion; the sequence is MGSRLPPAALTLKQFLVRQ.

This sequence belongs to the complex I LYR family.

The protein localises to the mitochondrion. Functionally, involved in efficient integration of the N-module into mitochondrial respiratory chain complex I. The protein is LYR motif-containing protein 2 (lyrm2) of Xenopus laevis (African clawed frog).